The chain runs to 338 residues: Aspartate-semialdehyde dehydrogenase (338 aa).

NADP(+) is bound by residues T13–V16 and S41–S42. R101 is a binding site for phosphate. C132 acts as the Acyl-thioester intermediate in catalysis. Position 159 (Q159) interacts with substrate. NADP(+)-binding positions include S162–G163 and P187. Residue K216 coordinates phosphate. Residue R237 participates in substrate binding. The active-site Proton acceptor is H244. N317 lines the NADP(+) pocket.

This sequence belongs to the aspartate-semialdehyde dehydrogenase family. In terms of assembly, homodimer.

It carries out the reaction L-aspartate 4-semialdehyde + phosphate + NADP(+) = 4-phospho-L-aspartate + NADPH + H(+). It participates in amino-acid biosynthesis; L-lysine biosynthesis via DAP pathway; (S)-tetrahydrodipicolinate from L-aspartate: step 2/4. It functions in the pathway amino-acid biosynthesis; L-methionine biosynthesis via de novo pathway; L-homoserine from L-aspartate: step 2/3. The protein operates within amino-acid biosynthesis; L-threonine biosynthesis; L-threonine from L-aspartate: step 2/5. In terms of biological role, catalyzes the NADPH-dependent formation of L-aspartate-semialdehyde (L-ASA) by the reductive dephosphorylation of L-aspartyl-4-phosphate. This chain is Aspartate-semialdehyde dehydrogenase, found in Rickettsia conorii (strain ATCC VR-613 / Malish 7).